Reading from the N-terminus, the 480-residue chain is Uridine 5'-monophosphate synthase (480 aa).

N-acetylalanine is present on A2. The segment at 2–214 (AVARAALGPL…VFVAANHNGS (213 aa)) is OPRTase. A Phosphotyrosine modification is found at Y37. S214 is subject to Phosphoserine. Positions 215–220 (PLSIKE) are domain linker. Positions 221–480 (APKELSFGAR…WEAYLSRLGV (260 aa)) are OMPdecase. S257 serves as a coordination point for orotidine 5'-phosphate. UMP-binding positions include S257, D259, and 281 to 283 (KTH). K281 is an orotidine 5'-phosphate binding site. Residues D312, K314, and D317 each act as for OMPdecase activity in the active site. Residues K314, D317, T321, S372, 430–432 (QQY), and 450–451 (GR) contribute to the orotidine 5'-phosphate site. Residues D317, T321, S372, 430 to 432 (QQY), and 450 to 451 (GR) contribute to the UMP site.

The protein in the N-terminal section; belongs to the purine/pyrimidine phosphoribosyltransferase family. This sequence in the C-terminal section; belongs to the OMP decarboxylase family. Homodimer; dimerization is required for enzymatic activity.

The catalysed reaction is orotidine 5'-phosphate + diphosphate = orotate + 5-phospho-alpha-D-ribose 1-diphosphate. It carries out the reaction orotidine 5'-phosphate + H(+) = UMP + CO2. It participates in pyrimidine metabolism; UMP biosynthesis via de novo pathway; UMP from orotate: step 1/2. It functions in the pathway pyrimidine metabolism; UMP biosynthesis via de novo pathway; UMP from orotate: step 2/2. Its function is as follows. Bifunctional enzyme catalyzing the last two steps of de novo pyrimidine biosynthesis, orotate phosphoribosyltransferase (OPRT), which converts orotate to orotidine-5'-monophosphate (OMP), and orotidine-5'-monophosphate decarboxylase (ODC), the terminal enzymatic reaction that decarboxylates OMP to uridine monophosphate (UMP). This chain is Uridine 5'-monophosphate synthase, found in Homo sapiens (Human).